The chain runs to 456 residues: 3-isopropylmalate dehydratase large subunit (456 aa).

Residues C336, C396, and C399 each coordinate [4Fe-4S] cluster.

Belongs to the aconitase/IPM isomerase family. LeuC type 1 subfamily. In terms of assembly, heterodimer of LeuC and LeuD. [4Fe-4S] cluster is required as a cofactor.

The enzyme catalyses (2R,3S)-3-isopropylmalate = (2S)-2-isopropylmalate. Its pathway is amino-acid biosynthesis; L-leucine biosynthesis; L-leucine from 3-methyl-2-oxobutanoate: step 2/4. Functionally, catalyzes the isomerization between 2-isopropylmalate and 3-isopropylmalate, via the formation of 2-isopropylmaleate. This is 3-isopropylmalate dehydratase large subunit from Staphylococcus aureus (strain JH1).